Consider the following 145-residue polypeptide: D-aminoacyl-tRNA deacylase (145 aa).

A Gly-cisPro motif, important for rejection of L-amino acids motif is present at residues 137-138 (GP).

Belongs to the DTD family. In terms of assembly, homodimer.

It localises to the cytoplasm. It carries out the reaction glycyl-tRNA(Ala) + H2O = tRNA(Ala) + glycine + H(+). It catalyses the reaction a D-aminoacyl-tRNA + H2O = a tRNA + a D-alpha-amino acid + H(+). In terms of biological role, an aminoacyl-tRNA editing enzyme that deacylates mischarged D-aminoacyl-tRNAs. Also deacylates mischarged glycyl-tRNA(Ala), protecting cells against glycine mischarging by AlaRS. Acts via tRNA-based rather than protein-based catalysis; rejects L-amino acids rather than detecting D-amino acids in the active site. By recycling D-aminoacyl-tRNA to D-amino acids and free tRNA molecules, this enzyme counteracts the toxicity associated with the formation of D-aminoacyl-tRNA entities in vivo and helps enforce protein L-homochirality. This is D-aminoacyl-tRNA deacylase from Salmonella enteritidis PT4 (strain P125109).